Consider the following 441-residue polypeptide: Chitinase-like protein Idgf3 (441 aa).

A signal peptide spans 1 to 23 (MTGSLWLSLALSLAVLAQFKVSA). The region spanning 25-441 (PNLVCFYDSQ…MLRAIKYRLL (417 aa)) is the GH18 domain. A disulfide bond links cysteine 29 and cysteine 56. An N-linked (GlcNAc...) asparagine glycan is attached at asparagine 221. The segment at 307–331 (KDSGDSGMPVVPSTQGPAPAGPQSK) is disordered. A disulfide bridge links cysteine 342 with cysteine 425.

This sequence belongs to the glycosyl hydrolase 18 family. IDGF subfamily. Glycosylated. Primarily expressed in yolk cells and fat body. In larvae, it is expressed in small and large salivary gland cells, and weakly expressed in imaginal disks. Less expressed than Idgf2 and Idgf4.

Its subcellular location is the secreted. Functionally, cooperates with insulin-like peptides to stimulate the proliferation, polarization and motility of imaginal disk cells. May act by stabilizing the binding of insulin-like peptides to its receptor through a simultaneous interaction with both molecules to form a multiprotein signaling complex. In Drosophila melanogaster (Fruit fly), this protein is Chitinase-like protein Idgf3 (Idgf3).